The chain runs to 373 residues: MGYLFEETLSSNPKTPIVVDDDNELGLMAVRLANAAAFPMVLKASLELGVFDTLYAEASRTDSFLSPSEIASKLPTTPRNPGAPVLLDRMLRLLASYSMVKCEKVSVGKEQRVYRAEPICRFFLKNNIQDIGSLASQVIVNFDSVFLNTWAQLKDVVLEGGDAFGRAHGGMKLFDYMGTDERFSKLFNQTGFTIAVVKKALEVYQGFKGVNVLVDVGGGVGNTLGVVTSKYPNIKGINFDLTCALAQAPTYPGVEHVAGDMFVDVPTGNAMILKRILHDWTDEDCVKILKNCWKSLPQNGKVVVIELVTPDEAENGDINANIAFDMDMLMFTQCSGGKERSRAEFEALAAASGFSHCQFVCQAYHCWIIEFCK.

Gly-217, Asp-240, Asp-260, Met-261, and Lys-274 together coordinate S-adenosyl-L-homocysteine. The Proton acceptor role is filled by His-278.

Belongs to the class I-like SAM-binding methyltransferase superfamily. Cation-independent O-methyltransferase family.

Its pathway is secondary metabolite biosynthesis. Involved in indole glucosinolate biosynthesis. Catalyzes methoxylation reactions of the glucosinolate indole ring. Converts the hydroxy intermediates 4-hydroxy-indol-3-yl-methylglucosinolate (4OH-I3M) and 1-hydroxy-indol-3-yl-methylglucosinolate (1OH-I3M) to 4-methoxy-indol-3-yl-methylglucosinolate (4MO-I3M) and 1-methoxy-indol-3-yl-methylglucosinolate(1MO-I3M), respectively. The sequence is that of Indole glucosinolate O-methyltransferase 3 from Arabidopsis thaliana (Mouse-ear cress).